We begin with the raw amino-acid sequence, 469 residues long: ATP-dependent protease ATPase subunit HslU (469 aa).

Residues isoleucine 24, 66–71, aspartate 282, glutamate 347, and arginine 419 contribute to the ATP site; that span reads GVGKTE.

It belongs to the ClpX chaperone family. HslU subfamily. As to quaternary structure, a double ring-shaped homohexamer of HslV is capped on each side by a ring-shaped HslU homohexamer. The assembly of the HslU/HslV complex is dependent on binding of ATP.

Its subcellular location is the cytoplasm. Functionally, ATPase subunit of a proteasome-like degradation complex; this subunit has chaperone activity. The binding of ATP and its subsequent hydrolysis by HslU are essential for unfolding of protein substrates subsequently hydrolyzed by HslV. HslU recognizes the N-terminal part of its protein substrates and unfolds these before they are guided to HslV for hydrolysis. This chain is ATP-dependent protease ATPase subunit HslU, found in Listeria monocytogenes serovar 1/2a (strain ATCC BAA-679 / EGD-e).